The following is an 80-amino-acid chain: Exodeoxyribonuclease 7 small subunit (80 aa).

This sequence belongs to the XseB family. In terms of assembly, heterooligomer composed of large and small subunits.

Its subcellular location is the cytoplasm. It carries out the reaction Exonucleolytic cleavage in either 5'- to 3'- or 3'- to 5'-direction to yield nucleoside 5'-phosphates.. In terms of biological role, bidirectionally degrades single-stranded DNA into large acid-insoluble oligonucleotides, which are then degraded further into small acid-soluble oligonucleotides. The sequence is that of Exodeoxyribonuclease 7 small subunit from Shigella sonnei (strain Ss046).